The sequence spans 60 residues: Large ribosomal subunit protein bL32 (60 aa).

It belongs to the bacterial ribosomal protein bL32 family.

The polypeptide is Large ribosomal subunit protein bL32 (Thermosipho africanus (strain TCF52B)).